A 500-amino-acid polypeptide reads, in one-letter code: Protein nucleotidyltransferase YdiU (500 aa).

Positions 96, 98, 99, 119, 131, 132, 182, and 189 each coordinate ATP. Asp258 acts as the Proton acceptor in catalysis. 2 residues coordinate Mg(2+): Asn259 and Asp268. Position 268 (Asp268) interacts with ATP.

This sequence belongs to the SELO family. The cofactor is Mg(2+). Mn(2+) serves as cofactor.

The catalysed reaction is L-seryl-[protein] + ATP = 3-O-(5'-adenylyl)-L-seryl-[protein] + diphosphate. It carries out the reaction L-threonyl-[protein] + ATP = 3-O-(5'-adenylyl)-L-threonyl-[protein] + diphosphate. The enzyme catalyses L-tyrosyl-[protein] + ATP = O-(5'-adenylyl)-L-tyrosyl-[protein] + diphosphate. It catalyses the reaction L-histidyl-[protein] + UTP = N(tele)-(5'-uridylyl)-L-histidyl-[protein] + diphosphate. The catalysed reaction is L-seryl-[protein] + UTP = O-(5'-uridylyl)-L-seryl-[protein] + diphosphate. It carries out the reaction L-tyrosyl-[protein] + UTP = O-(5'-uridylyl)-L-tyrosyl-[protein] + diphosphate. Nucleotidyltransferase involved in the post-translational modification of proteins. It can catalyze the addition of adenosine monophosphate (AMP) or uridine monophosphate (UMP) to a protein, resulting in modifications known as AMPylation and UMPylation. The polypeptide is Protein nucleotidyltransferase YdiU (Rhizobium leguminosarum bv. trifolii (strain WSM2304)).